Consider the following 491-residue polypeptide: Cobyric acid synthase (491 aa).

In terms of domain architecture, GATase cobBQ-type spans Ala253–Leu429. Cys334 acts as the Nucleophile in catalysis. Residue His421 is part of the active site.

Belongs to the CobB/CobQ family. CobQ subfamily.

It functions in the pathway cofactor biosynthesis; adenosylcobalamin biosynthesis. Its function is as follows. Catalyzes amidations at positions B, D, E, and G on adenosylcobyrinic A,C-diamide. NH(2) groups are provided by glutamine, and one molecule of ATP is hydrogenolyzed for each amidation. This is Cobyric acid synthase from Mycobacterium marinum (strain ATCC BAA-535 / M).